The primary structure comprises 491 residues: Protein OrfX3 (491 aa).

Belongs to the TULIP P47 family. As to quaternary structure, heterodimer of OrfX1 and OrfX3; crystallizes as a dimer of heterodimers.

In terms of biological role, expression of the ptox operon (ntnh-orfX1-orfX2-orfX3-pmp1) in B.thuringiensis kills Anopheles but not Aedes mosquito 3rd instar larvae. The ntnh-pmp1 construct is about half as toxic. The chain is Protein OrfX3 from Paraclostridium bifermentans (Clostridium bifermentans).